Consider the following 276-residue polypeptide: Cerberus (276 aa).

The signal sequence occupies residues 1-20 (MLLCVLKIYIIFCLVNDGAG). 3 N-linked (GlcNAc...) asparagine glycosylation sites follow: Asn-103, Asn-118, and Asn-160. 4 cysteine pairs are disulfide-bonded: Cys-175-Cys-221, Cys-189-Cys-235, Cys-199-Cys-251, and Cys-203-Cys-253. Residues 175–259 (CKTLPFTQNI…ECACEAHKNN (85 aa)) form the CTCK domain. N-linked (GlcNAc...) asparagine glycosylation occurs at Asn-234.

This sequence belongs to the DAN family. In terms of assembly, the long chain interacts with nodal/nr-1, bmp4 and wnt8, thereby inhibiting their function. The short chain interacts with nodal/nr-1 but not bmp4 or wnt8. As to expression, expressed in the anterior endomesoderm of the early gastrula with expression expanded laterally around the margin at the endoderm/mesoderm boundary.

Its subcellular location is the secreted. In terms of biological role, inhibits wnt, nodal/nr-1 and bmp signaling in the embryo to promote head formation and anterior neural induction. Within the endoderm, acts as an essential mediator of nodal/nr-1-induced cardiogenesis in the overlying mesoderm. This chain is Cerberus, found in Xenopus tropicalis (Western clawed frog).